The primary structure comprises 124 residues: Fluoride-specific ion channel FluC (124 aa).

Helical transmembrane passes span 3–23 (IIAIAVGAAIGANLRYSLSIW), 34–54 (YGTLIVNVIGSFAIGFVLVLA), 66–86 (LLIVTGLLGGFTTFSSLSFET), and 100–120 (LYVLSSFGLGIAGVFLGAGVA). Residues Gly74 and Thr77 each contribute to the Na(+) site.

The protein belongs to the fluoride channel Fluc/FEX (TC 1.A.43) family.

The protein localises to the cell membrane. The enzyme catalyses fluoride(in) = fluoride(out). Na(+) is not transported, but it plays an essential structural role and its presence is essential for fluoride channel function. In terms of biological role, fluoride-specific ion channel. Important for reducing fluoride concentration in the cell, thus reducing its toxicity. This chain is Fluoride-specific ion channel FluC, found in Roseiflexus sp. (strain RS-1).